The following is a 157-amino-acid chain: Probable chemoreceptor glutamine deamidase CheD (157 aa).

It belongs to the CheD family.

The catalysed reaction is L-glutaminyl-[protein] + H2O = L-glutamyl-[protein] + NH4(+). Probably deamidates glutamine residues to glutamate on methyl-accepting chemotaxis receptors (MCPs), playing an important role in chemotaxis. The polypeptide is Probable chemoreceptor glutamine deamidase CheD (Archaeoglobus fulgidus (strain ATCC 49558 / DSM 4304 / JCM 9628 / NBRC 100126 / VC-16)).